Consider the following 202-residue polypeptide: GMP synthase [glutamine-hydrolyzing] subunit A (202 aa).

One can recognise a Glutamine amidotransferase type-1 domain in the interval 4 to 194 (KIYVVDNGGQ…IAICQQHKEK (191 aa)). The Nucleophile role is filled by cysteine 81. Residues histidine 168 and glutamate 170 contribute to the active site.

In terms of assembly, heterodimer composed of a glutamine amidotransferase subunit (A) and a GMP-binding subunit (B).

The catalysed reaction is XMP + L-glutamine + ATP + H2O = GMP + L-glutamate + AMP + diphosphate + 2 H(+). Its pathway is purine metabolism; GMP biosynthesis; GMP from XMP (L-Gln route): step 1/1. In terms of biological role, catalyzes the synthesis of GMP from XMP. This Thermoplasma volcanium (strain ATCC 51530 / DSM 4299 / JCM 9571 / NBRC 15438 / GSS1) protein is GMP synthase [glutamine-hydrolyzing] subunit A.